The chain runs to 40 residues: Photosystem II reaction center protein J (40 aa).

The chain crosses the membrane as a helical span at residues 10 to 30 (LWLIGTVAGILVIGLVGIFFY).

It belongs to the PsbJ family. As to quaternary structure, PSII is composed of 1 copy each of membrane proteins PsbA, PsbB, PsbC, PsbD, PsbE, PsbF, PsbH, PsbI, PsbJ, PsbK, PsbL, PsbM, PsbT, PsbX, PsbY, PsbZ, Psb30/Ycf12, at least 3 peripheral proteins of the oxygen-evolving complex and a large number of cofactors. It forms dimeric complexes.

The protein resides in the plastid. The protein localises to the chloroplast thylakoid membrane. One of the components of the core complex of photosystem II (PSII). PSII is a light-driven water:plastoquinone oxidoreductase that uses light energy to abstract electrons from H(2)O, generating O(2) and a proton gradient subsequently used for ATP formation. It consists of a core antenna complex that captures photons, and an electron transfer chain that converts photonic excitation into a charge separation. This is Photosystem II reaction center protein J from Marchantia polymorpha (Common liverwort).